We begin with the raw amino-acid sequence, 34 residues long: Cytochrome b6-f complex subunit 7 (34 aa).

The chain crosses the membrane as a helical span at residues Ala9–Leu27.

It belongs to the PetM family. The 4 large subunits of the cytochrome b6-f complex are cytochrome b6, subunit IV (17 kDa polypeptide, PetD), cytochrome f and the Rieske protein, while the 4 small subunits are PetG, PetL, PetM and PetN. The complex functions as a dimer.

It is found in the cellular thylakoid membrane. Its function is as follows. Component of the cytochrome b6-f complex, which mediates electron transfer between photosystem II (PSII) and photosystem I (PSI), cyclic electron flow around PSI, and state transitions. This Nostoc punctiforme (strain ATCC 29133 / PCC 73102) protein is Cytochrome b6-f complex subunit 7.